Reading from the N-terminus, the 254-residue chain is Axonemal dynein light intermediate polypeptide 1 (254 aa).

The tract at residues 1–55 (MIPPADSLLKHDNPVLISKNTERKSPKSRPLKVSSPQTVLTAPVPPPPKPKTPLL) is disordered. Residues 175–245 (ALQAEQGKSD…KRTNQQLKAQ (71 aa)) adopt a coiled-coil conformation.

It belongs to the inner dynein arm light chain family.

It is found in the cell projection. The protein resides in the cilium. It localises to the flagellum. The protein localises to the dynein axonemal particle. Its subcellular location is the cytoplasm. Functionally, involved in sperm flagellum assembly. This Xenopus laevis (African clawed frog) protein is Axonemal dynein light intermediate polypeptide 1.